The following is a 327-amino-acid chain: Aspartate--ammonia ligase (327 aa).

It belongs to the class-II aminoacyl-tRNA synthetase family. AsnA subfamily.

The protein resides in the cytoplasm. It carries out the reaction L-aspartate + NH4(+) + ATP = L-asparagine + AMP + diphosphate + H(+). Its pathway is amino-acid biosynthesis; L-asparagine biosynthesis; L-asparagine from L-aspartate (ammonia route): step 1/1. The protein is Aspartate--ammonia ligase of Fusobacterium nucleatum subsp. nucleatum (strain ATCC 25586 / DSM 15643 / BCRC 10681 / CIP 101130 / JCM 8532 / KCTC 2640 / LMG 13131 / VPI 4355).